The following is a 545-amino-acid chain: 2-succinyl-5-enolpyruvyl-6-hydroxy-3-cyclohexene-1-carboxylate synthase (545 aa).

The protein belongs to the TPP enzyme family. MenD subfamily. Homodimer. The cofactor is Mg(2+). Requires Mn(2+) as cofactor. It depends on thiamine diphosphate as a cofactor.

It carries out the reaction isochorismate + 2-oxoglutarate + H(+) = 5-enolpyruvoyl-6-hydroxy-2-succinyl-cyclohex-3-ene-1-carboxylate + CO2. It functions in the pathway quinol/quinone metabolism; 1,4-dihydroxy-2-naphthoate biosynthesis; 1,4-dihydroxy-2-naphthoate from chorismate: step 2/7. The protein operates within quinol/quinone metabolism; menaquinone biosynthesis. Its function is as follows. Catalyzes the thiamine diphosphate-dependent decarboxylation of 2-oxoglutarate and the subsequent addition of the resulting succinic semialdehyde-thiamine pyrophosphate anion to isochorismate to yield 2-succinyl-5-enolpyruvyl-6-hydroxy-3-cyclohexene-1-carboxylate (SEPHCHC). The polypeptide is 2-succinyl-5-enolpyruvyl-6-hydroxy-3-cyclohexene-1-carboxylate synthase (Nocardia farcinica (strain IFM 10152)).